The sequence spans 422 residues: Serine--tRNA ligase (422 aa).

Residue 229–231 (TAE) coordinates L-serine. 260-262 (RAE) serves as a coordination point for ATP. Glu283 contributes to the L-serine binding site. 347–350 (EISS) contributes to the ATP binding site. Ser383 is a binding site for L-serine.

This sequence belongs to the class-II aminoacyl-tRNA synthetase family. Type-1 seryl-tRNA synthetase subfamily. Homodimer. The tRNA molecule binds across the dimer.

It localises to the cytoplasm. The catalysed reaction is tRNA(Ser) + L-serine + ATP = L-seryl-tRNA(Ser) + AMP + diphosphate + H(+). It carries out the reaction tRNA(Sec) + L-serine + ATP = L-seryl-tRNA(Sec) + AMP + diphosphate + H(+). Its pathway is aminoacyl-tRNA biosynthesis; selenocysteinyl-tRNA(Sec) biosynthesis; L-seryl-tRNA(Sec) from L-serine and tRNA(Sec): step 1/1. Catalyzes the attachment of serine to tRNA(Ser). Is also able to aminoacylate tRNA(Sec) with serine, to form the misacylated tRNA L-seryl-tRNA(Sec), which will be further converted into selenocysteinyl-tRNA(Sec). The protein is Serine--tRNA ligase of Heliobacterium modesticaldum (strain ATCC 51547 / Ice1).